Consider the following 238-residue polypeptide: uncharacterized protein (238 aa).

7 helical membrane passes run 15 to 37, 50 to 69, 79 to 96, 101 to 118, 128 to 150, 163 to 183, and 203 to 225; these read FGALHFAIASVAVLLSALFVLLP, ARAGVAILFLRLGLMLCGTL, LPFHLCPAALISGSLYFI, IFFNLLYFWHFGSFVAVL, ILYAYLFMLTHCLEPAMVVFSLL, CAVLGFLLLAANALFWNRRLG, and FFVYQLLFVSALCLLMLVLYLPF.

It is found in the cell membrane. This is an uncharacterized protein from Treponema pallidum (strain Nichols).